The chain runs to 417 residues: Phosphoribosylamine--glycine ligase (417 aa).

In terms of domain architecture, ATP-grasp spans 108 to 307 (KRIMDEAGVP…LSTLLFAAAT (200 aa)). 134 to 188 (LDEFGAPYVVKADGLAAGKGVIVTEDRAAALAHAARYLTHGSVLVEEFLDGEEVS) is an ATP binding site. The Mg(2+) site is built by Glu-277 and Asn-279.

This sequence belongs to the GARS family. Requires Mg(2+) as cofactor. It depends on Mn(2+) as a cofactor.

The enzyme catalyses 5-phospho-beta-D-ribosylamine + glycine + ATP = N(1)-(5-phospho-beta-D-ribosyl)glycinamide + ADP + phosphate + H(+). Its pathway is purine metabolism; IMP biosynthesis via de novo pathway; N(1)-(5-phospho-D-ribosyl)glycinamide from 5-phospho-alpha-D-ribose 1-diphosphate: step 2/2. This chain is Phosphoribosylamine--glycine ligase, found in Leifsonia xyli subsp. xyli (strain CTCB07).